A 336-amino-acid polypeptide reads, in one-letter code: MSFFGFGQSVEVEILLNDAESRKRAEHKTEDGKKEKYFLFYDGETVSGKVGLALKNPNKRLEHQGIKIEFIGQIELYYDRGNHHEFVSLVKDLARPGEITQSQAFDFEFTHVEKPYESYTGQNVKLRYFLRATISRRLNDVVKEMDIVVHTLSTYPELNSSIKMEVGIEDCLHIEFEYNKSKYHLKDVIVGKIYFLLVRIKIKHMEIDIIKRETTGTGPNVYHENVTIAKYEIMDGAPVRGESIPIRLFLAGYELTPTMRDINKKFSVRYYLNLVLIDEEERRYFKQQEVVLWRKGDIVRKSMSHQAAIASQRFEGTTSLGEVRTPSQLSDNNCRQ.

A phosphoserine mark is found at S302, S304, and S319.

This sequence belongs to the VPS26 family. In terms of assembly, component of the heterotrimeric retromer cargo-selective complex (CSC), also described as vacuolar protein sorting subcomplex (VPS), formed by VPS26 (VPS26A or VPS26B), VPS29 and VPS35. The CSC has a highly elongated structure with VPS26 and VPS29 binding independently at opposite distal ends of VPS35 as central platform. The CSC is believed to associate with variable sorting nexins to form functionally distinct retromer complex variants. The originally described SNX-BAR retromer is a pentamer containing the CSC and a heterodimeric membrane-deforming subcomplex formed between SNX1 or SNX2 and SNX5 or SNX6 (also called SNX-BAR subcomplex); the respective CSC and SNX-BAR subcomplexes associate with low affinity. The CSC associates with SNX3 to form a SNX3-retromer complex. The CSC associates with SNX27, the WASH complex and the SNX-BAR subcomplex to form the SNX27-retromer complex. Interacts with VPS29, VPS35, TBC1D5, GOLPH3, SNX27.

It localises to the cytoplasm. It is found in the membrane. The protein localises to the early endosome. The protein resides in the late endosome. In terms of biological role, acts as a component of the retromer cargo-selective complex (CSC). The CSC is believed to be the core functional component of retromer or respective retromer complex variants acting to prevent missorting of selected transmembrane cargo proteins into the lysosomal degradation pathway. The recruitment of the CSC to the endosomal membrane involves RAB7A and SNX3. The SNX-BAR retromer mediates retrograde transport of cargo proteins from endosomes to the trans-Golgi network (TGN) and is involved in endosome-to-plasma membrane transport for cargo protein recycling. The SNX3-retromer mediates the retrograde transport of WLS distinct from the SNX-BAR retromer pathway. The SNX27-retromer is believed to be involved in endosome-to-plasma membrane trafficking and recycling of a broad spectrum of cargo proteins. The CSC seems to act as recruitment hub for other proteins, such as the WASH complex and TBC1D5. May be involved in retrograde transport of SORT1 but not of IGF2R. Acts redundantly with VSP26A in SNX-27 mediated endocytic recycling of SLC2A1/GLUT1. The chain is Vacuolar protein sorting-associated protein 26B (VPS26B) from Pongo abelii (Sumatran orangutan).